The primary structure comprises 331 residues: Putative heat stress transcription factor A-6a (331 aa).

The tract at residues 135–160 (RRGAGTGSTTPRAVNCGGGGGEGEVE) is disordered. Residues 156-238 (EGEVERLRRD…VERKKRRMLA (83 aa)) are a coiled coil. The hydrophobic repeat HR-A/B stretch occupies residues 162 to 212 (LRRDKEALARELARLRRQQQEARAQLLDMERRVRGTERRQEQCTEFLARAL). The Nuclear localization signal motif lies at 230-235 (ERKKRR). The short motif at 246–253 (LTFEALAL) is the Nuclear export signal element. An AHA1 motif is present at residues 270 to 279 (DMIWYELLGE). The short motif at 305–313 (AEPWEEMGE) is the AHA2 element.

This sequence belongs to the HSF family. Class A subfamily. Homotrimer. Post-translationally, exhibits temperature-dependent phosphorylation.

It localises to the cytoplasm. It is found in the nucleus. Transcriptional regulator that specifically binds DNA of heat shock promoter elements (HSE). This chain is Putative heat stress transcription factor A-6a (HSFA6A), found in Oryza sativa subsp. japonica (Rice).